Here is a 431-residue protein sequence, read N- to C-terminus: Glutamate-1-semialdehyde 2,1-aminomutase 2 (431 aa).

Lys-268 carries the post-translational modification N6-(pyridoxal phosphate)lysine.

It belongs to the class-III pyridoxal-phosphate-dependent aminotransferase family. HemL subfamily. In terms of assembly, homodimer. The cofactor is pyridoxal 5'-phosphate.

It is found in the cytoplasm. The catalysed reaction is (S)-4-amino-5-oxopentanoate = 5-aminolevulinate. Its pathway is porphyrin-containing compound metabolism; protoporphyrin-IX biosynthesis; 5-aminolevulinate from L-glutamyl-tRNA(Glu): step 2/2. This chain is Glutamate-1-semialdehyde 2,1-aminomutase 2, found in Anoxybacillus flavithermus (strain DSM 21510 / WK1).